Here is a 439-residue protein sequence, read N- to C-terminus: Methylenetetrahydrofolate--tRNA-(uracil-5-)-methyltransferase TrmFO (439 aa).

8–13 (GAGLAG) serves as a coordination point for FAD.

This sequence belongs to the MnmG family. TrmFO subfamily. The cofactor is FAD.

It localises to the cytoplasm. The catalysed reaction is uridine(54) in tRNA + (6R)-5,10-methylene-5,6,7,8-tetrahydrofolate + NADH + H(+) = 5-methyluridine(54) in tRNA + (6S)-5,6,7,8-tetrahydrofolate + NAD(+). The enzyme catalyses uridine(54) in tRNA + (6R)-5,10-methylene-5,6,7,8-tetrahydrofolate + NADPH + H(+) = 5-methyluridine(54) in tRNA + (6S)-5,6,7,8-tetrahydrofolate + NADP(+). Functionally, catalyzes the folate-dependent formation of 5-methyl-uridine at position 54 (M-5-U54) in all tRNAs. This chain is Methylenetetrahydrofolate--tRNA-(uracil-5-)-methyltransferase TrmFO, found in Magnetococcus marinus (strain ATCC BAA-1437 / JCM 17883 / MC-1).